We begin with the raw amino-acid sequence, 705 residues long: Tyrosine decarboxylase (705 aa).

The span at 22-32 shows a compositional bias: polar residues; that stretch reads RIRNSLSPSRP. Residues 22 to 81 are disordered; it reads RIRNSLSPSRPSMSEATATGSSSSSRASTTIPSTPNMDVTPTVEDPRQNDNNASGMTRDE. A compositionally biased stretch (low complexity) spans 33-55; it reads SMSEATATGSSSSSRASTTIPST. N6-(pyridoxal phosphate)lysine is present on Lys380. Positions 554–620 form a coiled coil; sequence VKAVIAEEDE…AQKQHESLAK (67 aa). Residues 667–678 show a composition bias toward polar residues; the sequence is HSQRPNRLSQSP. The segment at 667 to 687 is disordered; sequence HSQRPNRLSQSPGSAGSAFFD.

The protein belongs to the group II decarboxylase family. Requires pyridoxal 5'-phosphate as cofactor. As to expression, expressed in the gonadal sheath projections in between the oocytes, in head RIM motor neurons and RIC interneurons.

The protein localises to the cytoplasm. It is found in the cell projection. Its subcellular location is the axon. It localises to the perikaryon. It catalyses the reaction L-tyrosine + H(+) = tyramine + CO2. In terms of biological role, required for the decarboxylation of tyrosine to tyramine, a precursor of octopamine but probably also itself a neurotransmitter. Involved in the regulation of egg laying, which is inhibited by tyramine. Also involved in controlling locomotion and head movements. Due to its involvement in octopamine biosynthesis, also required for crtc-1-dependent regulation of AMPK-mediated longevity which requires octopamine signaling. This chain is Tyrosine decarboxylase, found in Caenorhabditis elegans.